A 351-amino-acid polypeptide reads, in one-letter code: Phosphoribosylformylglycinamidine cyclo-ligase (351 aa).

Belongs to the AIR synthase family.

The protein resides in the cytoplasm. The catalysed reaction is 2-formamido-N(1)-(5-O-phospho-beta-D-ribosyl)acetamidine + ATP = 5-amino-1-(5-phospho-beta-D-ribosyl)imidazole + ADP + phosphate + H(+). Its pathway is purine metabolism; IMP biosynthesis via de novo pathway; 5-amino-1-(5-phospho-D-ribosyl)imidazole from N(2)-formyl-N(1)-(5-phospho-D-ribosyl)glycinamide: step 2/2. The protein is Phosphoribosylformylglycinamidine cyclo-ligase of Burkholderia lata (strain ATCC 17760 / DSM 23089 / LMG 22485 / NCIMB 9086 / R18194 / 383).